Consider the following 190-residue polypeptide: NADH-quinone oxidoreductase subunit C (190 aa).

This sequence belongs to the complex I 30 kDa subunit family. As to quaternary structure, NDH-1 is composed of 14 different subunits. Subunits NuoB, C, D, E, F, and G constitute the peripheral sector of the complex.

The protein localises to the cell membrane. The enzyme catalyses a quinone + NADH + 5 H(+)(in) = a quinol + NAD(+) + 4 H(+)(out). In terms of biological role, NDH-1 shuttles electrons from NADH, via FMN and iron-sulfur (Fe-S) centers, to quinones in the respiratory chain. The immediate electron acceptor for the enzyme in this species is believed to be ubiquinone. Couples the redox reaction to proton translocation (for every two electrons transferred, four hydrogen ions are translocated across the cytoplasmic membrane), and thus conserves the redox energy in a proton gradient. The polypeptide is NADH-quinone oxidoreductase subunit C (Wolbachia sp. subsp. Brugia malayi (strain TRS)).